A 232-amino-acid polypeptide reads, in one-letter code: Orotidine 5'-phosphate decarboxylase (232 aa).

Substrate-binding positions include Asp-13, Lys-35, 62-71, Thr-121, Arg-182, Gln-191, Gly-211, and Arg-212; that span reads DLKFHDIPNT. The Proton donor role is filled by Lys-64.

It belongs to the OMP decarboxylase family. Type 1 subfamily. In terms of assembly, homodimer.

The enzyme catalyses orotidine 5'-phosphate + H(+) = UMP + CO2. It participates in pyrimidine metabolism; UMP biosynthesis via de novo pathway; UMP from orotate: step 2/2. Its function is as follows. Catalyzes the decarboxylation of orotidine 5'-monophosphate (OMP) to uridine 5'-monophosphate (UMP). This is Orotidine 5'-phosphate decarboxylase from Acinetobacter baumannii (strain ACICU).